A 364-amino-acid polypeptide reads, in one-letter code: Methylthioribose-1-phosphate isomerase (364 aa).

Residues 51–53 (RGA), Arg88, and Gln199 contribute to the substrate site. Residue Asp240 is the Proton donor of the active site. 250 to 251 (NK) is a substrate binding site.

Belongs to the eIF-2B alpha/beta/delta subunits family. MtnA subfamily.

The catalysed reaction is 5-(methylsulfanyl)-alpha-D-ribose 1-phosphate = 5-(methylsulfanyl)-D-ribulose 1-phosphate. Its pathway is amino-acid biosynthesis; L-methionine biosynthesis via salvage pathway; L-methionine from S-methyl-5-thio-alpha-D-ribose 1-phosphate: step 1/6. Its function is as follows. Catalyzes the interconversion of methylthioribose-1-phosphate (MTR-1-P) into methylthioribulose-1-phosphate (MTRu-1-P). This chain is Methylthioribose-1-phosphate isomerase, found in Cereibacter sphaeroides (strain KD131 / KCTC 12085) (Rhodobacter sphaeroides).